We begin with the raw amino-acid sequence, 354 residues long: Deubiquitination-protection protein dph1 (354 aa).

Residues 1-78 (MTNISLTIKA…SIHLVKTLGQ (78 aa)) form the Ubiquitin-like domain. Residues 309-353 (PPEERYAEQLSQLNEMGFVDFERNVQALRRSGGNVQGAIESLLSD) enclose the UBA domain.

Functionally, protects ubiquitin chains against dissambly by deubiquitinating enzymes thereby promoting protein degradation. The protein is Deubiquitination-protection protein dph1 (dph1) of Schizosaccharomyces pombe (strain 972 / ATCC 24843) (Fission yeast).